Here is a 194-residue protein sequence, read N- to C-terminus: Coiled-coil domain-containing protein 184 (194 aa).

The stretch at 39–68 (GMKELMEHLKAQLQALFEDVRAMRGALDEQ) forms a coiled coil. The tract at residues 101–176 (GLGVVGGKGS…LLGGDGPLVE (76 aa)) is disordered. Positions 135–145 (PEDEEEEEEEK) are enriched in acidic residues.

This is Coiled-coil domain-containing protein 184 (CCDC184) from Homo sapiens (Human).